A 640-amino-acid polypeptide reads, in one-letter code: Biosynthetic arginine decarboxylase (640 aa).

N6-(pyridoxal phosphate)lysine is present on Lys109. A substrate-binding site is contributed by 291–301 (LDVGGGLGVDY).

It belongs to the Orn/Lys/Arg decarboxylase class-II family. SpeA subfamily. Requires Mg(2+) as cofactor. Pyridoxal 5'-phosphate is required as a cofactor.

The enzyme catalyses L-arginine + H(+) = agmatine + CO2. The protein operates within amine and polyamine biosynthesis; agmatine biosynthesis; agmatine from L-arginine: step 1/1. Functionally, catalyzes the biosynthesis of agmatine from arginine. The polypeptide is Biosynthetic arginine decarboxylase (Synechococcus sp. (strain RCC307)).